Reading from the N-terminus, the 240-residue chain is UDP-2,3-diacylglucosamine hydrolase (240 aa).

Asp9, His11, Asp43, Asn81, and His116 together coordinate Mn(2+). 81–82 (NR) provides a ligand contact to substrate. Substrate-binding residues include Asp124, Ser162, Lys166, Lys169, and His197. The Mn(2+) site is built by His197 and His199.

Belongs to the LpxH family. It depends on Mn(2+) as a cofactor.

The protein resides in the cell inner membrane. It carries out the reaction UDP-2-N,3-O-bis[(3R)-3-hydroxytetradecanoyl]-alpha-D-glucosamine + H2O = 2-N,3-O-bis[(3R)-3-hydroxytetradecanoyl]-alpha-D-glucosaminyl 1-phosphate + UMP + 2 H(+). It participates in glycolipid biosynthesis; lipid IV(A) biosynthesis; lipid IV(A) from (3R)-3-hydroxytetradecanoyl-[acyl-carrier-protein] and UDP-N-acetyl-alpha-D-glucosamine: step 4/6. In terms of biological role, hydrolyzes the pyrophosphate bond of UDP-2,3-diacylglucosamine to yield 2,3-diacylglucosamine 1-phosphate (lipid X) and UMP by catalyzing the attack of water at the alpha-P atom. Involved in the biosynthesis of lipid A, a phosphorylated glycolipid that anchors the lipopolysaccharide to the outer membrane of the cell. The chain is UDP-2,3-diacylglucosamine hydrolase from Neisseria gonorrhoeae (strain ATCC 700825 / FA 1090).